Here is a 141-residue protein sequence, read N- to C-terminus: Nucleoside diphosphate kinase (141 aa).

Residues Lys-11, Phe-59, Arg-87, Thr-93, Arg-104, and Asn-114 each coordinate ATP. His-117 functions as the Pros-phosphohistidine intermediate in the catalytic mechanism.

Belongs to the NDK family. Homotetramer. Mg(2+) is required as a cofactor.

The protein localises to the cytoplasm. It catalyses the reaction a 2'-deoxyribonucleoside 5'-diphosphate + ATP = a 2'-deoxyribonucleoside 5'-triphosphate + ADP. The enzyme catalyses a ribonucleoside 5'-diphosphate + ATP = a ribonucleoside 5'-triphosphate + ADP. Functionally, major role in the synthesis of nucleoside triphosphates other than ATP. The ATP gamma phosphate is transferred to the NDP beta phosphate via a ping-pong mechanism, using a phosphorylated active-site intermediate. This chain is Nucleoside diphosphate kinase, found in Nitrosomonas eutropha (strain DSM 101675 / C91 / Nm57).